A 108-amino-acid chain; its full sequence is uncharacterized protein (108 aa).

To H.influenzae HI_0341.

This is an uncharacterized protein from Escherichia coli (strain K12).